A 207-amino-acid chain; its full sequence is Cytochrome c biogenesis ATP-binding export protein CcmA (207 aa).

The 204-residue stretch at 4 to 207 (LEARELLCER…RISLTQTRAA (204 aa)) folds into the ABC transporter domain. An ATP-binding site is contributed by 36–43 (GSNGAGKT).

Belongs to the ABC transporter superfamily. CcmA exporter (TC 3.A.1.107) family. As to quaternary structure, the complex is composed of two ATP-binding proteins (CcmA) and two transmembrane proteins (CcmB).

The protein resides in the cell inner membrane. It carries out the reaction heme b(in) + ATP + H2O = heme b(out) + ADP + phosphate + H(+). Its function is as follows. Part of the ABC transporter complex CcmAB involved in the biogenesis of c-type cytochromes; once thought to export heme, this seems not to be the case, but its exact role is uncertain. Responsible for energy coupling to the transport system. The sequence is that of Cytochrome c biogenesis ATP-binding export protein CcmA from Shigella flexneri.